Consider the following 150-residue polypeptide: Arginine repressor (150 aa).

This sequence belongs to the ArgR family.

It localises to the cytoplasm. It participates in amino-acid biosynthesis; L-arginine biosynthesis [regulation]. Its function is as follows. Regulates arginine biosynthesis genes. This Carboxydothermus hydrogenoformans (strain ATCC BAA-161 / DSM 6008 / Z-2901) protein is Arginine repressor.